The following is a 141-amino-acid chain: Endoribonuclease YbeY (141 aa).

3 residues coordinate Zn(2+): H101, H105, and H111.

It belongs to the endoribonuclease YbeY family. Requires Zn(2+) as cofactor.

The protein resides in the cytoplasm. Its function is as follows. Single strand-specific metallo-endoribonuclease involved in late-stage 70S ribosome quality control and in maturation of the 3' terminus of the 16S rRNA. This is Endoribonuclease YbeY from Nitrosomonas eutropha (strain DSM 101675 / C91 / Nm57).